The primary structure comprises 215 residues: 3,4-dihydroxy-2-butanone 4-phosphate synthase (215 aa).

D-ribulose 5-phosphate-binding positions include 37 to 38 (RE), aspartate 42, 150 to 154 (RPGHT), and glutamate 174. Glutamate 38 is a Mg(2+) binding site. Position 153 (histidine 153) interacts with Mg(2+).

The protein belongs to the DHBP synthase family. Homodimer. Mg(2+) is required as a cofactor. The cofactor is Mn(2+).

It catalyses the reaction D-ribulose 5-phosphate = (2S)-2-hydroxy-3-oxobutyl phosphate + formate + H(+). It functions in the pathway cofactor biosynthesis; riboflavin biosynthesis; 2-hydroxy-3-oxobutyl phosphate from D-ribulose 5-phosphate: step 1/1. Catalyzes the conversion of D-ribulose 5-phosphate to formate and 3,4-dihydroxy-2-butanone 4-phosphate. This Buchnera aphidicola subsp. Acyrthosiphon pisum (strain 5A) protein is 3,4-dihydroxy-2-butanone 4-phosphate synthase.